Reading from the N-terminus, the 970-residue chain is Isoleucine--tRNA ligase (970 aa).

The 'HIGH' region motif lies at 65–75 (PYANGHLHIGH). Residue glutamate 608 participates in L-isoleucyl-5'-AMP binding. A 'KMSKS' region motif is present at residues 649 to 653 (KMSKS). Residue lysine 652 coordinates ATP. Zn(2+)-binding residues include cysteine 943, cysteine 946, cysteine 962, and cysteine 965.

It belongs to the class-I aminoacyl-tRNA synthetase family. IleS type 1 subfamily. In terms of assembly, monomer. It depends on Zn(2+) as a cofactor.

The protein resides in the cytoplasm. It catalyses the reaction tRNA(Ile) + L-isoleucine + ATP = L-isoleucyl-tRNA(Ile) + AMP + diphosphate. Its function is as follows. Catalyzes the attachment of isoleucine to tRNA(Ile). As IleRS can inadvertently accommodate and process structurally similar amino acids such as valine, to avoid such errors it has two additional distinct tRNA(Ile)-dependent editing activities. One activity is designated as 'pretransfer' editing and involves the hydrolysis of activated Val-AMP. The other activity is designated 'posttransfer' editing and involves deacylation of mischarged Val-tRNA(Ile). The sequence is that of Isoleucine--tRNA ligase from Ruegeria pomeroyi (strain ATCC 700808 / DSM 15171 / DSS-3) (Silicibacter pomeroyi).